The chain runs to 368 residues: 2-aminoethylphosphonate--pyruvate transaminase (368 aa).

The residue at position 192 (Lys-192) is an N6-(pyridoxal phosphate)lysine.

It belongs to the class-V pyridoxal-phosphate-dependent aminotransferase family. PhnW subfamily. Homodimer. Requires pyridoxal 5'-phosphate as cofactor.

The catalysed reaction is (2-aminoethyl)phosphonate + pyruvate = phosphonoacetaldehyde + L-alanine. Functionally, involved in phosphonate degradation. This is 2-aminoethylphosphonate--pyruvate transaminase from Pseudomonas entomophila (strain L48).